Consider the following 462-residue polypeptide: Cysteine--tRNA ligase (462 aa).

Cys24 is a binding site for Zn(2+). The 'HIGH' region signature appears at 26-36; it reads PTVYDDAHLGH. Positions 199, 224, and 228 each coordinate Zn(2+). Positions 256-260 match the 'KMSKS' region motif; the sequence is KMSKS. An ATP-binding site is contributed by Lys259.

It belongs to the class-I aminoacyl-tRNA synthetase family. As to quaternary structure, monomer. The cofactor is Zn(2+).

Its subcellular location is the cytoplasm. It catalyses the reaction tRNA(Cys) + L-cysteine + ATP = L-cysteinyl-tRNA(Cys) + AMP + diphosphate. This is Cysteine--tRNA ligase from Campylobacter jejuni subsp. jejuni serotype O:6 (strain 81116 / NCTC 11828).